A 351-amino-acid polypeptide reads, in one-letter code: Glycerol-1-phosphate dehydrogenase [NAD(P)+] (351 aa).

NAD(+) is bound by residues glycine 93 to aspartate 97 and threonine 115 to serine 118. Aspartate 120 contacts substrate. Serine 124 contacts NAD(+). Residue aspartate 167 participates in substrate binding. Residues aspartate 167 and histidine 247 each coordinate Zn(2+). Histidine 251 contacts substrate. Residue histidine 263 coordinates Zn(2+).

The protein belongs to the glycerol-1-phosphate dehydrogenase family. The cofactor is Zn(2+).

The protein localises to the cytoplasm. It carries out the reaction sn-glycerol 1-phosphate + NAD(+) = dihydroxyacetone phosphate + NADH + H(+). The enzyme catalyses sn-glycerol 1-phosphate + NADP(+) = dihydroxyacetone phosphate + NADPH + H(+). It functions in the pathway membrane lipid metabolism; glycerophospholipid metabolism. In terms of biological role, catalyzes the NAD(P)H-dependent reduction of dihydroxyacetonephosphate (DHAP or glycerone phosphate) to glycerol 1-phosphate (G1P). The G1P thus generated is used as the glycerophosphate backbone of phospholipids in the cellular membranes of Archaea. This chain is Glycerol-1-phosphate dehydrogenase [NAD(P)+], found in Archaeoglobus fulgidus (strain ATCC 49558 / DSM 4304 / JCM 9628 / NBRC 100126 / VC-16).